A 542-amino-acid polypeptide reads, in one-letter code: Ribonuclease Y (542 aa).

The helical transmembrane segment at 1–21 (MLIALIAVSVLAVAAIIGSLA) threads the bilayer. The disordered stretch occupies residues 52-92 (SRASQDLADSRKDVAKARAELESSRTRASDEARRADNADQA). Positions 59–92 (ADSRKDVAKARAELESSRTRASDEARRADNADQA) are enriched in basic and acidic residues. The 61-residue stretch at 229–289 (VVSVVPLPSN…MRREVARQAL (61 aa)) folds into the KH domain. One can recognise an HD domain in the interval 355–449 (VLDHCVECAR…VKAADAISAA (95 aa)).

This sequence belongs to the RNase Y family.

The protein localises to the cell membrane. In terms of biological role, endoribonuclease that initiates mRNA decay. In Cutibacterium acnes (strain DSM 16379 / KPA171202) (Propionibacterium acnes), this protein is Ribonuclease Y.